The following is a 150-amino-acid chain: D-aminoacyl-tRNA deacylase (150 aa).

A Gly-cisPro motif, important for rejection of L-amino acids motif is present at residues glycine 138–proline 139.

This sequence belongs to the DTD family. In terms of assembly, homodimer.

Its subcellular location is the cytoplasm. It catalyses the reaction glycyl-tRNA(Ala) + H2O = tRNA(Ala) + glycine + H(+). The catalysed reaction is a D-aminoacyl-tRNA + H2O = a tRNA + a D-alpha-amino acid + H(+). In terms of biological role, an aminoacyl-tRNA editing enzyme that deacylates mischarged D-aminoacyl-tRNAs. Also deacylates mischarged glycyl-tRNA(Ala), protecting cells against glycine mischarging by AlaRS. Acts via tRNA-based rather than protein-based catalysis; rejects L-amino acids rather than detecting D-amino acids in the active site. By recycling D-aminoacyl-tRNA to D-amino acids and free tRNA molecules, this enzyme counteracts the toxicity associated with the formation of D-aminoacyl-tRNA entities in vivo and helps enforce protein L-homochirality. The polypeptide is D-aminoacyl-tRNA deacylase (Flavobacterium psychrophilum (strain ATCC 49511 / DSM 21280 / CIP 103535 / JIP02/86)).